Here is a 359-residue protein sequence, read N- to C-terminus: Peptide chain release factor 1 (359 aa).

Residue Q235 is modified to N5-methylglutamine. Residues 283–309 (QKAESERSQARRSQVGSGDRSERIRTY) are disordered.

Belongs to the prokaryotic/mitochondrial release factor family. Methylated by PrmC. Methylation increases the termination efficiency of RF1.

The protein localises to the cytoplasm. Its function is as follows. Peptide chain release factor 1 directs the termination of translation in response to the peptide chain termination codons UAG and UAA. This chain is Peptide chain release factor 1, found in Brucella melitensis biotype 2 (strain ATCC 23457).